The following is an 89-amino-acid chain: Mitochondrial import inner membrane translocase subunit Tim9 (89 aa).

Residue alanine 2 is modified to N-acetylalanine. A Twin CX3C motif motif is present at residues 28–52 (CFLDCVKDFTTREVKPEEVTCSEHC). Cystine bridges form between cysteine 28–cysteine 52 and cysteine 32–cysteine 48.

It belongs to the small Tim family. As to quaternary structure, heterohexamer; composed of 3 copies of TIMM9 and 3 copies of TIMM10/TIM10A, named soluble 70 kDa complex. The complex forms a 6-bladed alpha-propeller structure and associates with the TIMM22 component of the TIM22 complex. Interacts with multi-pass transmembrane proteins in transit. Also forms a complex composed of TIMM9, TIMM10/TIM10A and FXC1/TIM10B.

Its subcellular location is the mitochondrion inner membrane. Functionally, mitochondrial intermembrane chaperone that participates in the import and insertion of multi-pass transmembrane proteins into the mitochondrial inner membrane. May also be required for the transfer of beta-barrel precursors from the TOM complex to the sorting and assembly machinery (SAM complex) of the outer membrane. Acts as a chaperone-like protein that protects the hydrophobic precursors from aggregation and guide them through the mitochondrial intermembrane space. The protein is Mitochondrial import inner membrane translocase subunit Tim9 (Timm9) of Mus musculus (Mouse).